Consider the following 281-residue polypeptide: MISNRNNNTSIHNATVENVEGKYKSIGDISTEMLNPVIIDKTVWTIFNNLNIDVQYPLELECYLNIVEKSYNIIYENKFSINWLPTMGTACFRAILGDKNVTITCNILQAIIISLFNDTNNLSASSVYNKTGIQYDLSEKILESLFEANIVTRKYSSNDTVYIVNTHNYTGDTNINIINEFIELFETPVNSSNSSVNLSMDKKSDDSKIQETDISTAETDVKFLGDEDYVDGNEDCISDNEDAKKYDSDTDSDLGDLEDPNEPKLIVDSCSDCSESDSEEY.

Disordered regions lie at residues 192 to 212 and 227 to 281; these read SNSS…IQET and EDYV…SEEY. Positions 200 to 211 are enriched in basic and acidic residues; the sequence is MDKKSDDSKIQE. 2 stretches are compositionally biased toward acidic residues: residues 227–240 and 249–260; these read EDYV…ISDN and DTDSDLGDLEDP.

The protein belongs to the cullin family.

This is an uncharacterized protein from Acanthamoeba polyphaga (Amoeba).